Reading from the N-terminus, the 255-residue chain is 14-3-3-like protein GF14 psi (255 aa).

Ser66 bears the Phosphoserine mark. Thr162 carries the phosphothreonine modification. At Ser189 the chain carries Phosphoserine. 2 positions are modified to phosphothreonine: Thr210 and Thr238.

The protein belongs to the 14-3-3 family. As to quaternary structure, component of a DNA binding complex that binds to the G box. Interacts with IDH3, AGT3, GLN1-1, GLN1-2, GLN1-4, SAM1, SAM2, MDH1, METK3 and MDH2. Binds to 1-aminocyclopropane-1-carboxylate synthases (ACS) such as ACS2, ACS5, ACS6, ACS8, and ACS11. Interacts with FD. Interacts with DREB1A and DREB1B in the nucleus. Interacts with CINV1.

It is found in the cytoplasm. The protein resides in the nucleus. Its function is as follows. Is associated with a DNA binding complex that binds to the G box, a well-characterized cis-acting DNA regulatory element found in plant genes. Involved in the regulation of nutrient metabolism. Reciprocal negative transcription regulation of miR396. Negative regulator of constitutive freezing tolerance and cold acclimation by controlling cold-induced gene expression partially through an ethylene (ET)-dependent pathway; prevents ethylene (ET) biosynthesis, probably by binding 1-aminocyclopropane-1-carboxylate synthases (ACS) to reduce their stability, thus contributing to establish adequate ET levels under both standard and low-temperature conditions. The polypeptide is 14-3-3-like protein GF14 psi (Arabidopsis thaliana (Mouse-ear cress)).